We begin with the raw amino-acid sequence, 216 residues long: Adenylate kinase (216 aa).

10–15 (GAGKGT) contributes to the ATP binding site. Positions 30–59 (STGDMLRAAVSAQTEVGKRAKAVMDAGKLV) are NMP. Residues Thr-31, Arg-36, 57-59 (KLV), 85-88 (GFPR), and Gln-92 each bind AMP. The LID stretch occupies residues 126 to 163 (GRYTCANCGTGYHDENLKPKVEGVCDKCGSTHFKRRPD). Arg-127 contacts ATP. Cys-130, Cys-133, Cys-150, and Cys-153 together coordinate Zn(2+). Arg-160 and Arg-172 together coordinate AMP. Ala-200 contacts ATP.

This sequence belongs to the adenylate kinase family. Monomer.

The protein resides in the cytoplasm. It carries out the reaction AMP + ATP = 2 ADP. It participates in purine metabolism; AMP biosynthesis via salvage pathway; AMP from ADP: step 1/1. In terms of biological role, catalyzes the reversible transfer of the terminal phosphate group between ATP and AMP. Plays an important role in cellular energy homeostasis and in adenine nucleotide metabolism. The polypeptide is Adenylate kinase (Allorhizobium ampelinum (strain ATCC BAA-846 / DSM 112012 / S4) (Agrobacterium vitis (strain S4))).